A 174-amino-acid chain; its full sequence is Transcription antitermination protein NusB (174 aa).

Residues Met1–Arg28 are disordered. The span at Thr16–Lys25 shows a compositional bias: basic and acidic residues.

Belongs to the NusB family.

In terms of biological role, involved in transcription antitermination. Required for transcription of ribosomal RNA (rRNA) genes. Binds specifically to the boxA antiterminator sequence of the ribosomal RNA (rrn) operons. The protein is Transcription antitermination protein NusB of Rhodopseudomonas palustris (strain BisB5).